The chain runs to 540 residues: CTP synthase (540 aa).

The segment at 1 to 267 is amidoligase domain; the sequence is MTKYIFVTGG…DQKVCDFLHL (267 aa). Serine 13 is a binding site for CTP. Serine 13 contributes to the UTP binding site. Residue 14–19 participates in ATP binding; the sequence is SLGKGI. Residue tyrosine 54 coordinates L-glutamine. Aspartate 71 contributes to the ATP binding site. 2 residues coordinate Mg(2+): aspartate 71 and glutamate 141. CTP contacts are provided by residues 148-150, 188-193, and lysine 224; these read DIE and KTKPTQ. UTP-binding positions include 188–193 and lysine 224; that span reads KTKPTQ. Positions 294–537 constitute a Glutamine amidotransferase type-1 domain; that stretch reads TITLVGKYVE…IGAASGLPAQ (244 aa). Glycine 356 is an L-glutamine binding site. Cysteine 383 (nucleophile; for glutamine hydrolysis) is an active-site residue. L-glutamine-binding positions include 384-387, glutamate 407, and arginine 465; that span reads LGMQ. Active-site residues include histidine 510 and glutamate 512.

Belongs to the CTP synthase family. In terms of assembly, homotetramer.

The enzyme catalyses UTP + L-glutamine + ATP + H2O = CTP + L-glutamate + ADP + phosphate + 2 H(+). The catalysed reaction is L-glutamine + H2O = L-glutamate + NH4(+). It carries out the reaction UTP + NH4(+) + ATP = CTP + ADP + phosphate + 2 H(+). The protein operates within pyrimidine metabolism; CTP biosynthesis via de novo pathway; CTP from UDP: step 2/2. Allosterically activated by GTP, when glutamine is the substrate; GTP has no effect on the reaction when ammonia is the substrate. The allosteric effector GTP functions by stabilizing the protein conformation that binds the tetrahedral intermediate(s) formed during glutamine hydrolysis. Inhibited by the product CTP, via allosteric rather than competitive inhibition. In terms of biological role, catalyzes the ATP-dependent amination of UTP to CTP with either L-glutamine or ammonia as the source of nitrogen. Regulates intracellular CTP levels through interactions with the four ribonucleotide triphosphates. This is CTP synthase from Lactobacillus johnsonii (strain CNCM I-12250 / La1 / NCC 533).